The sequence spans 291 residues: MNWLFKKIGLVARQSKPEVVESLLLLSHHLESQGLHVFIDRDSVTRSQAQGLTLIDRSDFGKIVDVAIVLGGDGTMLSVARLLAPYRVPLIGINQGRLGFMTDIPLHQMLDSVSAILSGEFLPEERMLLQSTVVRDGVEIAHHLAFNDIVINRGAMGQMIEFEVFVDNQFVYSQRSDGLIISTPTGSTAYSLASGGPILHPTVPAISLVPICPQSLNNRPIAINDSSEVEFMLTRGIDARVHFDGQAHCDLMELDRVLVRRYRNSLKILHPLGYSYFDMLRQKLHWGERLL.

D73 (proton acceptor) is an active-site residue. NAD(+) is bound by residues 73–74, 147–148, R175, D177, and Q246; these read DG and ND.

The protein belongs to the NAD kinase family. A divalent metal cation is required as a cofactor.

It is found in the cytoplasm. The enzyme catalyses NAD(+) + ATP = ADP + NADP(+) + H(+). Functionally, involved in the regulation of the intracellular balance of NAD and NADP, and is a key enzyme in the biosynthesis of NADP. Catalyzes specifically the phosphorylation on 2'-hydroxyl of the adenosine moiety of NAD to yield NADP. This chain is NAD kinase, found in Laribacter hongkongensis (strain HLHK9).